A 299-amino-acid polypeptide reads, in one-letter code: Protoheme IX farnesyltransferase (299 aa).

9 consecutive transmembrane segments (helical) span residues 25–45 (VVLL…RAGV), 47–67 (WTVL…AAAV), 95–115 (AAAI…LLLF), 119–139 (LAAW…TGFL), 147–167 (IVIG…AVTG), 173–193 (PLLL…ALAI), 218–238 (VHIL…YAIH), 243–263 (LYLV…WVLY), and 279–299 (IWYL…LLNI).

This sequence belongs to the UbiA prenyltransferase family. Protoheme IX farnesyltransferase subfamily.

The protein localises to the cell inner membrane. The enzyme catalyses heme b + (2E,6E)-farnesyl diphosphate + H2O = Fe(II)-heme o + diphosphate. It participates in porphyrin-containing compound metabolism; heme O biosynthesis; heme O from protoheme: step 1/1. In terms of biological role, converts heme B (protoheme IX) to heme O by substitution of the vinyl group on carbon 2 of heme B porphyrin ring with a hydroxyethyl farnesyl side group. The sequence is that of Protoheme IX farnesyltransferase from Ectopseudomonas mendocina (strain ymp) (Pseudomonas mendocina).